We begin with the raw amino-acid sequence, 211 residues long: MKKITRIGIGGPVGSGKTAVIEVITPILIQRGIKPLIITNDIVTTEDAKQVKRTLKGILDEEKILGVETGACPHTAVREDPSMNIAAVEEMEARFPDSDVVLIESGGDNLTLTFSPALADFYIYVIDVAEGEKIPRKNGPGLVQADILVINKIDLAPYVGASLAVMEHDTQVVRGQRPYILTNCKTGEGVETLVNMIMRDFLFTHSLQATQ.

Position 11 to 18 (11 to 18 (GPVGSGKT)) interacts with GTP.

It belongs to the SIMIBI class G3E GTPase family. UreG subfamily. As to quaternary structure, homodimer. UreD, UreF and UreG form a complex that acts as a GTP-hydrolysis-dependent molecular chaperone, activating the urease apoprotein by helping to assemble the nickel containing metallocenter of UreC. The UreE protein probably delivers the nickel.

The protein resides in the cytoplasm. In terms of biological role, facilitates the functional incorporation of the urease nickel metallocenter. This process requires GTP hydrolysis, probably effectuated by UreG. This chain is Urease accessory protein UreG, found in Photorhabdus laumondii subsp. laumondii (strain DSM 15139 / CIP 105565 / TT01) (Photorhabdus luminescens subsp. laumondii).